Consider the following 200-residue polypeptide: Lipopolysaccharide core heptose(II)-phosphate phosphatase (200 aa).

The N-terminal stretch at methionine 1–alanine 25 is a signal peptide.

The protein belongs to the phosphoglycerate mutase family. Ais subfamily.

The protein resides in the periplasm. It functions in the pathway bacterial outer membrane biogenesis; lipopolysaccharide metabolism. Functionally, catalyzes the dephosphorylation of heptose(II) of the outer membrane lipopolysaccharide core. The protein is Lipopolysaccharide core heptose(II)-phosphate phosphatase of Escherichia coli O17:K52:H18 (strain UMN026 / ExPEC).